We begin with the raw amino-acid sequence, 48 residues long: Large ribosomal subunit protein eL40 (48 aa).

This sequence belongs to the eukaryotic ribosomal protein eL40 family.

The chain is Large ribosomal subunit protein eL40 from Methanoculleus marisnigri (strain ATCC 35101 / DSM 1498 / JR1).